We begin with the raw amino-acid sequence, 268 residues long: Shikimate dehydrogenase (NADP(+)) (268 aa).

Residues 14–16 (SKS) and Thr61 contribute to the shikimate site. Lys65 functions as the Proton acceptor in the catalytic mechanism. Shikimate contacts are provided by Asn86 and Asp102. NADP(+) is bound by residues 126–130 (GAGGA), 149–154 (NRTFLK), and Met213. Position 215 (Tyr215) interacts with shikimate. Gly238 lines the NADP(+) pocket.

The protein belongs to the shikimate dehydrogenase family. Homodimer.

It catalyses the reaction shikimate + NADP(+) = 3-dehydroshikimate + NADPH + H(+). It functions in the pathway metabolic intermediate biosynthesis; chorismate biosynthesis; chorismate from D-erythrose 4-phosphate and phosphoenolpyruvate: step 4/7. In terms of biological role, involved in the biosynthesis of the chorismate, which leads to the biosynthesis of aromatic amino acids. Catalyzes the reversible NADPH linked reduction of 3-dehydroshikimate (DHSA) to yield shikimate (SA). This Haemophilus influenzae (strain PittGG) protein is Shikimate dehydrogenase (NADP(+)).